A 691-amino-acid polypeptide reads, in one-letter code: Ribonuclease J (691 aa).

Residues 1-89 are disordered; sequence MTDNNHYENN…TRNYAKEELD (89 aa). Residues 1–132 are loss of region decreases protein stability, still able to interact with RhpA, but has decreased RNase activity even on ssRNA; the sequence is MTDNNHYENN…KIQVEHLNPH (132 aa). Over residues 10-19 the composition is skewed to low complexity; it reads NESNENSSEN. Residues 41 to 57 show a composition bias toward basic and acidic residues; sequence RENAQKNGESSHHEAPS. Residues 58–82 show a composition bias toward basic residues; it reads HHKKEHRPNKKPNNHHKQKHAKTRN. N6-acetyllysine is present on residues Lys134 and Lys140. Zn(2+) contacts are provided by His208, His210, Asp212, His213, His277, and Asp299. N6-acetyllysine occurs at positions 323, 337, and 397. Residue 500 to 504 coordinates substrate; sequence HVSGH. N6-acetyllysine is present on Lys511. Position 526 (His526) interacts with Zn(2+). N6-acetyllysine occurs at positions 547, 634, and 649.

Belongs to the metallo-beta-lactamase superfamily. RNA-metabolizing metallo-beta-lactamase-like family. Bacterial RNase J subfamily. As to quaternary structure, homodimer. Homotetramer; dimer of homodimers. Interacts with RNA helicase RphA, might be a member of a minimal RNA degradosome complex. Zn(2+) serves as cofactor. In terms of processing, acetylated on nine lysine residues. Some of the residues are acetylated by multiple different mechanisms. RimL is partially responsible for the acetylation of Lys-323, Lys-397 and Lys-649. HPB8_1270 homolog is partially responsible for the acetylation of Lys-323, Lys-397, Lys-511 and Lys-649. Acetyl-phosphate-mediated non-enzymatic acetylation pathway takes part in the acetylation of Lys-134, Lys-323, Lys-397, Lys-511 and Lys-649. Acetylation of the remaining residues Lys-140, Lys-337, Lys-547 and Lys-634 occurs by a yet undetermined mechanism. Acetylation on a number of these residues is important for growth regulation and proper cell morphology.

It localises to the cytoplasm. Catalytic activity is regulated by the balance between homodimers and homotetramers, with homotetramers being the active forms of this enzyme. Acetylation allosterically regulates the homooligomerization state and hence the catalytic activity. An RNase that has 5'-3' exoribonuclease and endoribonuclease activity. Degrades 5'-monophosphorylated ssRNA and dsRNA, considerably more active on ssRNA. Association with RhpA significantly increases the dsRNase activity. Degrades RNA substrate with hairpin structures at both ends with low activity, but presence of RhpA significantly increases the activity on this substrate. Stimulates ATPase activity of RNA helicase RhpA. Involved in stabilization of mRNA but apparently not rRNA. This Helicobacter pylori (strain B128) protein is Ribonuclease J.